A 338-amino-acid chain; its full sequence is Tetraacyldisaccharide 4'-kinase (338 aa).

67-74 (IAGGAGKT) contacts ATP.

It belongs to the LpxK family.

It catalyses the reaction a lipid A disaccharide + ATP = a lipid IVA + ADP + H(+). Its pathway is glycolipid biosynthesis; lipid IV(A) biosynthesis; lipid IV(A) from (3R)-3-hydroxytetradecanoyl-[acyl-carrier-protein] and UDP-N-acetyl-alpha-D-glucosamine: step 6/6. In terms of biological role, transfers the gamma-phosphate of ATP to the 4'-position of a tetraacyldisaccharide 1-phosphate intermediate (termed DS-1-P) to form tetraacyldisaccharide 1,4'-bis-phosphate (lipid IVA). This chain is Tetraacyldisaccharide 4'-kinase, found in Acidovorax ebreus (strain TPSY) (Diaphorobacter sp. (strain TPSY)).